The chain runs to 135 residues: Class I hydrophobin 2 (135 aa).

A signal peptide spans 1–20; sequence MFARLTSTLFALAAVSAVFA. Disulfide bonds link Cys-29-Cys-114, Cys-36-Cys-107, Cys-37-Cys-73, and Cys-115-Cys-128. 2 N-linked (GlcNAc...) asparagine glycosylation sites follow: Asn-117 and Asn-132.

It belongs to the fungal hydrophobin family. In terms of assembly, self-assembles to form functional amyloid fibrils called rodlets. Self-assembly into fibrillar rodlets occurs spontaneously at hydrophobic:hydrophilic interfaces and the rodlets further associate laterally to form amphipathic monolayers.

The protein localises to the secreted. The protein resides in the cell wall. In terms of biological role, aerial growth, conidiation, and dispersal of filamentous fungi in the environment rely upon a capability of their secreting small amphipathic proteins called hydrophobins (HPBs) with low sequence identity. Class I can self-assemble into an outermost layer of rodlet bundles on aerial cell surfaces, conferring cellular hydrophobicity that supports fungal growth, development and dispersal; whereas Class II form highly ordered films at water-air interfaces through intermolecular interactions but contribute nothing to the rodlet structure. The chain is Class I hydrophobin 2 from Coprinopsis cinerea (strain Okayama-7 / 130 / ATCC MYA-4618 / FGSC 9003) (Inky cap fungus).